A 259-amino-acid polypeptide reads, in one-letter code: Global transcriptional regulator CodY (259 aa).

Residues 1-155 (MNLLEKTRKI…GATVVGMEIL (155 aa)) are GAF domain. Positions 203–222 (ASKIADRVGITRSVIVNALR) form a DNA-binding region, H-T-H motif. Ser-215 carries the post-translational modification Phosphoserine.

It belongs to the CodY family.

The protein resides in the cytoplasm. Its function is as follows. DNA-binding global transcriptional regulator which is involved in the adaptive response to starvation and acts by directly or indirectly controlling the expression of numerous genes in response to nutrient availability. During rapid exponential growth, CodY is highly active and represses genes whose products allow adaptation to nutrient depletion. The protein is Global transcriptional regulator CodY of Anoxybacillus flavithermus (strain DSM 21510 / WK1).